The chain runs to 593 residues: Arginine--tRNA ligase (593 aa).

The 'HIGH' region signature appears at 138-148; that stretch reads ANPTGPLHVGH.

It belongs to the class-I aminoacyl-tRNA synthetase family. As to quaternary structure, monomer.

The protein localises to the cytoplasm. The catalysed reaction is tRNA(Arg) + L-arginine + ATP = L-arginyl-tRNA(Arg) + AMP + diphosphate. In Burkholderia orbicola (strain MC0-3), this protein is Arginine--tRNA ligase.